The chain runs to 347 residues: GTPase Obg (347 aa).

In terms of domain architecture, Obg spans 1-159 (MKFVDEATIK…RVLRLELKLL (159 aa)). Residues 127–146 (NTRYKTSTNRAPRQSKPGTP) form a disordered region. Positions 129-138 (RYKTSTNRAP) are enriched in polar residues. In terms of domain architecture, OBG-type G spans 160-334 (ADVGLLGLPN…LMQAIMKYLE (175 aa)). GTP-binding positions include 166-173 (GLPNAGKS), 191-195 (FTTLY), 213-216 (DIPG), 284-287 (NKID), and 315-317 (SAA). The Mg(2+) site is built by Ser-173 and Thr-193.

Belongs to the TRAFAC class OBG-HflX-like GTPase superfamily. OBG GTPase family. In terms of assembly, monomer. Requires Mg(2+) as cofactor.

The protein resides in the cytoplasm. An essential GTPase which binds GTP, GDP and possibly (p)ppGpp with moderate affinity, with high nucleotide exchange rates and a fairly low GTP hydrolysis rate. Plays a role in control of the cell cycle, stress response, ribosome biogenesis and in those bacteria that undergo differentiation, in morphogenesis control. The sequence is that of GTPase Obg from Thioalkalivibrio sulfidiphilus (strain HL-EbGR7).